A 236-amino-acid chain; its full sequence is MSMPFYISPEQLMADRADYARKGIARGRAVIVATCTEGIVFATENHSQALHKISEIYDRIGFAAVGKYNEFEALRVAGIRYADLRGYSYDRSDVTARALAHAYAQTLGTAFTTESKPMEVEVVVAELGHDASRDEIYHLSYDGSVAQEHGCVVIGGDQDTIDAVFRSSWEPTMSLADTLTAITQALSQPPQKDAEHTMVTPAPTYEAALLDRSRPRRTFRRLTVTDFVPSTQGTRS.

It belongs to the peptidase T1A family. The 20S proteasome core is composed of 14 alpha and 14 beta subunits that assemble into four stacked heptameric rings, resulting in a barrel-shaped structure. The two inner rings, each composed of seven catalytic beta subunits, are sandwiched by two outer rings, each composed of seven alpha subunits. The catalytic chamber with the active sites is on the inside of the barrel. Has a gated structure, the ends of the cylinder being occluded by the N-termini of the alpha-subunits. Is capped by the proteasome-associated ATPase, ARC.

The protein localises to the cytoplasm. It participates in protein degradation; proteasomal Pup-dependent pathway. The formation of the proteasomal ATPase ARC-20S proteasome complex, likely via the docking of the C-termini of ARC into the intersubunit pockets in the alpha-rings, may trigger opening of the gate for substrate entry. Interconversion between the open-gate and close-gate conformations leads to a dynamic regulation of the 20S proteasome proteolysis activity. In terms of biological role, component of the proteasome core, a large protease complex with broad specificity involved in protein degradation. The protein is Proteasome subunit alpha of Jonesia denitrificans (strain ATCC 14870 / DSM 20603 / BCRC 15368 / CIP 55.134 / JCM 11481 / NBRC 15587 / NCTC 10816 / Prevot 55134) (Listeria denitrificans).